The chain runs to 3748 residues: Intermembrane lipid transfer protein VPS13C (3748 aa).

Positions Leu3–Leu115 constitute a Chorein N-terminal domain. Residue Ser132 is modified to Phosphoserine. At Thr613 the chain carries Phosphothreonine. Ser618 is modified (phosphoserine). Residue Thr623 is modified to Phosphothreonine. A phosphoserine mark is found at Ser736, Ser841, Ser871, and Ser873. An FFAT motif is present at residues Glu876–Asp882. Thr1968 bears the Phosphothreonine mark. Ser1974 and Ser2442 each carry phosphoserine. The tract at residues Asp2410 to Thr3304 is required for late endosome/lysosome localization. One can recognise an SHR-BD domain in the interval Glu2760–Ile3012. Positions Glu3305–Ser3748 are required for lipid droplet localization. Omega-N-methylarginine occurs at positions 3514 and 3521. Position 3533 is an N6-acetyllysine (Lys3533).

The protein belongs to the VPS13 family.

Its subcellular location is the mitochondrion outer membrane. The protein resides in the lipid droplet. The protein localises to the endoplasmic reticulum membrane. It localises to the lysosome membrane. It is found in the late endosome membrane. Its function is as follows. Mediates the transfer of lipids between membranes at organelle contact sites. Necessary for proper mitochondrial function and maintenance of mitochondrial transmembrane potential. Involved in the regulation of PINK1/PRKN-mediated mitophagy in response to mitochondrial depolarization. The protein is Intermembrane lipid transfer protein VPS13C of Mus musculus (Mouse).